Here is a 163-residue protein sequence, read N- to C-terminus: NADH-quinone oxidoreductase subunit I (163 aa).

4Fe-4S ferredoxin-type domains lie at 54–84 and 94–123; these read LRRY…IDAE and TRYD…EGPN. Positions 64, 67, 70, 74, 103, 106, 109, and 113 each coordinate [4Fe-4S] cluster.

The protein belongs to the complex I 23 kDa subunit family. NDH-1 is composed of at least 14 different subunits, Nqo1 to Nqo14. The complex has a L-shaped structure, with the hydrophobic arm (subunits Nqo7, Nqo8, Nqo10 to Nqo14) embedded in the inner membrane and the hydrophilic peripheral arm (subunits Nqo1 to Nqo6, Nqo9) protruding into the bacterial cytoplasm. The hydrophilic domain contains all the redox centers. NADH-quinone oxidoreductase forms a supercomplex with ubiquinol-cytochrome c reductase complex (complex III or cytochrome b-c1 complex) and cytochrome c oxidase (complex IV), which stabilizes the NADH-quinone oxidoreductase complex. The cofactor is [4Fe-4S] cluster.

The protein resides in the cell inner membrane. It catalyses the reaction a quinone + NADH + 5 H(+)(in) = a quinol + NAD(+) + 4 H(+)(out). Functionally, NDH-1 shuttles electrons from NADH, via FMN and iron-sulfur (Fe-S) centers, to quinones in the respiratory chain. The immediate electron acceptor for the enzyme in this species is believed to be ubiquinone. Couples the redox reaction to proton translocation (for every two electrons transferred, four hydrogen ions are translocated across the cytoplasmic membrane), and thus conserves the redox energy in a proton gradient. This is NADH-quinone oxidoreductase subunit I from Paracoccus denitrificans (strain Pd 1222).